The sequence spans 697 residues: Elongation factor G 2 (697 aa).

Residues 5 to 280 (SKYRNIGIFA…AVVDYLPAPD (276 aa)) form the tr-type G domain. GTP is bound by residues 14 to 21 (AHVDAGKT), 78 to 82 (DTPGH), and 132 to 135 (NKLD).

The protein belongs to the TRAFAC class translation factor GTPase superfamily. Classic translation factor GTPase family. EF-G/EF-2 subfamily.

It is found in the cytoplasm. Catalyzes the GTP-dependent ribosomal translocation step during translation elongation. During this step, the ribosome changes from the pre-translocational (PRE) to the post-translocational (POST) state as the newly formed A-site-bound peptidyl-tRNA and P-site-bound deacylated tRNA move to the P and E sites, respectively. Catalyzes the coordinated movement of the two tRNA molecules, the mRNA and conformational changes in the ribosome. This is Elongation factor G 2 from Shewanella denitrificans (strain OS217 / ATCC BAA-1090 / DSM 15013).